The primary structure comprises 97 residues: Co-chaperonin GroES (97 aa).

It belongs to the GroES chaperonin family. In terms of assembly, heptamer of 7 subunits arranged in a ring. Interacts with the chaperonin GroEL.

The protein resides in the cytoplasm. Its function is as follows. Together with the chaperonin GroEL, plays an essential role in assisting protein folding. The GroEL-GroES system forms a nano-cage that allows encapsulation of the non-native substrate proteins and provides a physical environment optimized to promote and accelerate protein folding. GroES binds to the apical surface of the GroEL ring, thereby capping the opening of the GroEL channel. This Buchnera aphidicola subsp. Tuberolachnus salignus protein is Co-chaperonin GroES.